Here is a 335-residue protein sequence, read N- to C-terminus: 2-acylglycerol O-acyltransferase 1 (335 aa).

A run of 2 helical transmembrane segments spans residues 18 to 38 (TVAVLQWVLKYLLLGPMSIGI) and 40 to 60 (VMLIIHNYLFLYIPYLMWLYF). 2 N-linked (GlcNAc...) asparagine glycosylation sites follow: N121 and N125. Residues 132 to 152 (LFPGFTSYLHVLPLWFWCPVF) form a helical membrane-spanning segment. N180 carries an N-linked (GlcNAc...) asparagine glycan.

This sequence belongs to the diacylglycerol acyltransferase family. In terms of tissue distribution, expressed in stomach and liver.

Its subcellular location is the endoplasmic reticulum membrane. It carries out the reaction a 2-acylglycerol + an acyl-CoA = a 1,2-diacylglycerol + CoA. It catalyses the reaction 2-(9Z-octadecenoyl)-glycerol + butanoyl-CoA = 1-butanoyl-2-(9Z-octadecenoyl)-glycerol + CoA. The enzyme catalyses 2-(9Z-octadecenoyl)-glycerol + octanoyl-CoA = 1-octanoyl-2-(9Z-octadecenoyl)-glycerol + CoA. The catalysed reaction is 2-(9Z-octadecenoyl)-glycerol + dodecanoyl-CoA = 1-dodecanoyl-2-(9Z-octadecenoyl)-glycerol + CoA. It carries out the reaction 2-(9Z-octadecenoyl)-glycerol + tetradecanoyl-CoA = 1-tetradecanoyl-2-(9Z-octadecenoyl)-glycerol + CoA. It catalyses the reaction 2-(9Z-octadecenoyl)-glycerol + hexadecanoyl-CoA = 1-hexadecanoyl-2-(9Z-octadecenoyl)-glycerol + CoA. The enzyme catalyses 2-(9Z-octadecenoyl)-glycerol + octadecanoyl-CoA = 1-octadecanoyl-2-(9Z-octadecenoyl)-glycerol + CoA. The catalysed reaction is eicosanoyl-CoA + 2-(9Z-octadecenoyl)-glycerol = 1-eicosanoyl-2-(9Z-octadecenoyl)-glycerol + CoA. It carries out the reaction 2-(9Z-octadecenoyl)-glycerol + (9Z)-octadecenoyl-CoA = 1,2-di-(9Z-octadecenoyl)-glycerol + CoA. It catalyses the reaction 2-(9Z-octadecenoyl)-glycerol + (9Z,12Z)-octadecadienoyl-CoA = 1-(9Z,12Z-octadecadienoyl)-2-(9Z-octadecenoyl)-glycerol + CoA. The enzyme catalyses 2-(9Z-octadecenoyl)-glycerol + (5Z,8Z,11Z,14Z)-eicosatetraenoyl-CoA = 1-(5Z,8Z,11Z,14Z-eicosatetraenoyl)-2-(9Z-octadecenoyl)-glycerol + CoA. The catalysed reaction is a 2-acylglycerol + an acyl-CoA = a 1,2-diacyl-sn-glycerol + CoA. It carries out the reaction a 2-acylglycerol + an acyl-CoA = a 2,3-diacyl-sn-glycerol + CoA. It catalyses the reaction a 1-acylglycerol + an acyl-CoA = a 1,2-diacylglycerol + CoA. The enzyme catalyses 1-dodecanoylglycerol + (9Z)-octadecenoyl-CoA = 1-dodecanoyl-2-(9Z-octadecenoyl)-glycerol + CoA. The catalysed reaction is 1-tetradecanoylglycerol + (9Z)-octadecenoyl-CoA = 1-tetradecanoyl-2-(9Z-octadecenoyl)-glycerol + CoA. It carries out the reaction 1-hexadecanoylglycerol + (9Z)-octadecenoyl-CoA = 1-hexadecanoyl-2-(9Z-octadecenoyl)-glycerol + CoA. It catalyses the reaction 1-(9Z-octadecenoyl)-glycerol + (9Z)-octadecenoyl-CoA = 1,2-di-(9Z-octadecenoyl)-glycerol + CoA. The enzyme catalyses 1-(9Z,12Z-octadecadienoyl)-glycerol + (9Z)-octadecenoyl-CoA = 1-(9Z,12Z-octadecadienoyl)-2-(9Z-octadecenoyl)-glycerol + CoA. The catalysed reaction is 1-(9Z,12Z,15Z-octadecatrienoyl)-glycerol + (9Z)-octadecenoyl-CoA = 1-(9Z,12Z,15Z-octadecatrienoyl)-2-(9Z-octadecenoyl)-glycerol + CoA. It carries out the reaction 1-(5Z,8Z,11Z,14Z-eicosatetraenoyl)-glycerol + (9Z)-octadecenoyl-CoA = 1-(5Z,8Z,11Z,14Z-eicosatetraenoyl)-2-(9Z-octadecenoyl)-glycerol + CoA. It catalyses the reaction a 1-acylglycerol + an acyl-CoA = a 1,3-diacylglycerol + CoA. The enzyme catalyses 1-dodecanoylglycerol + (9Z)-octadecenoyl-CoA = 1-dodecanoyl-3-(9Z-octadecenoyl)-glycerol + CoA. The catalysed reaction is 1-hexadecanoylglycerol + (9Z)-octadecenoyl-CoA = 1-(9Z-octadecenoyl)-3-hexadecanoylglycerol + CoA. It carries out the reaction 1-octadecanoylglycerol + (9Z)-octadecenoyl-CoA = 1-octadecanoyl-3-(9Z-octadecenoyl)-glycerol + CoA. It catalyses the reaction 1-(9Z-octadecenoyl)-sn-glycerol + (9Z)-octadecenoyl-CoA = 1,3-di-(9Z-octadecenoyl)-glycerol + CoA. The enzyme catalyses 1-(9Z,12Z-octadecadienoyl)-glycerol + (9Z)-octadecenoyl-CoA = 1-(9Z-octadecenoyl)-3-(9Z,12Z-octadecadienoyl)-glycerol + CoA. The catalysed reaction is 1-(9Z,12Z,15Z-octadecatrienoyl)-glycerol + (9Z)-octadecenoyl-CoA = 1-(9Z,12Z,15Z-octadecatrienoyl)-3-(9Z-octadecenoyl)-glycerol + CoA. It carries out the reaction a 1-acyl-sn-glycerol + an acyl-CoA = a 1,3-diacyl-sn-glycerol + CoA. It catalyses the reaction a 3-acyl-sn-glycerol + an acyl-CoA = a 1,3-diacyl-sn-glycerol + CoA. The enzyme catalyses 3-octadecanoyl-sn-glycerol + (9Z)-octadecenoyl-CoA = 1-(9Z-octadecenoyl)-3-octadecanoyl-sn-glycerol + CoA. Its pathway is glycerolipid metabolism; triacylglycerol biosynthesis. Functionally, involved in glycerolipid synthesis and lipid metabolism. Catalyzes the formation of diacylglycerol, the precursor of triacylglycerol, by transferring the acyl chain of a fatty acyl-CoA to a monoacylglycerol, mainly at the sn-1 or sn-3 positions. It uses both sn-2-monoacylglycerol (2-acylglycerol) and sn-1-monoacylglycerol (1-acyl-sn-glycerol) equally well as substrates, and uses sn-3-monoacylglycerol (3-acyl-sn-glycerol) with lower efficiency. Probably not involved in absorption of dietary fat in the small intestine. This chain is 2-acylglycerol O-acyltransferase 1, found in Homo sapiens (Human).